A 371-amino-acid chain; its full sequence is N-acetyldiaminopimelate deacetylase (371 aa).

D68 is an active-site residue. Residue E127 is the Proton acceptor of the active site.

Belongs to the peptidase M20A family. N-acetyldiaminopimelate deacetylase subfamily.

It carries out the reaction N-acetyl-(2S,6S)-2,6-diaminopimelate + H2O = (2S,6S)-2,6-diaminopimelate + acetate. It functions in the pathway amino-acid biosynthesis; L-lysine biosynthesis via DAP pathway; LL-2,6-diaminopimelate from (S)-tetrahydrodipicolinate (acetylase route): step 3/3. In terms of biological role, catalyzes the conversion of N-acetyl-diaminopimelate to diaminopimelate and acetate. The protein is N-acetyldiaminopimelate deacetylase of Listeria monocytogenes serotype 4b (strain CLIP80459).